Reading from the N-terminus, the 420-residue chain is Glycogen synthase kinase-3 beta (420 aa).

The segment covering 1 to 22 (MSGRPRTTSFAESCKPVQQPSA) has biased composition (polar residues). The disordered stretch occupies residues 1–53 (MSGRPRTTSFAESCKPVQQPSAFGSMKVSRDKDGSKVTTVVATPGQGPDRPQE). Ser9 carries the phosphoserine; by PKB/AKT1, RPS6KA3 and SGK3 modification. Cys14 is lipidated: S-palmitoyl cysteine. A Protein kinase domain is found at 56 to 340 (YTDTKVIGNG…PLEACAHSFF (285 aa)). ATP contacts are provided by residues 62–70 (IGNGSFGVV) and Lys85. The Proton acceptor role is filled by Asp181. Position 216 is a phosphotyrosine (Tyr216). The tract at residues 385 to 420 (QAAASPPANATAASDTNAGDRGQTNNAASASASNST) is disordered. 2 stretches are compositionally biased toward low complexity: residues 386–401 (AAAS…SDTN) and 409–420 (NNAASASASNST). Phosphoserine is present on Ser389.

It belongs to the protein kinase superfamily. CMGC Ser/Thr protein kinase family. GSK-3 subfamily. Monomer. Interacts with DAB2IP (via C2 domain); the interaction stimulates GSK3B kinase activation. Interacts (via C2 domain) with PPP2CA. Interacts with CABYR, MMP2, MUC1, NIN and PRUNE1. Interacts with AXIN1; the interaction mediates hyperphosphorylation of CTNNB1 leading to its ubiquitination and destruction. Interacts with and phosphorylates SNAI1. Interacts with DNM1L (via a C-terminal domain). Interacts with ARRB2. Interacts with DISC1. Found in a complex composed of MACF1, APC, AXIN1, CTNNB1 and GSK3B. Interacts with SGK3. Interacts with the CLOCK-BMAL1 heterodimer. Interacts with ZBED3. Interacts with the BMAL1. The complex composed, at least, of APC, CTNNB1 and GSK3B interacts with JPT1; the interaction requires the inactive form of GSK3B (phosphorylated at 'Ser-9'). Forms a complex composed of PRKAR2A or PRKAR2B, GSK3B and GSKIP through GSKIP interaction; facilitates PKA-induced phosphorylation and regulates GSK3B activity. Interacts with GSKIP. Interacts with GID8. Interacts with PIWIL2. Interacts with LMBR1L. Interacts with DDX3X. Interacts with BIRC2. Interacts with TNFRSF10B; TNFRSF10B stimulation inhibits GSK3B kinase activity. Found in a complex with SLC39A6, SLC39A10 and with GSK3B that controls NCAM1 phosphorylation. Interacts with PKP3 (via ARM repeats); the interaction may be involved in PKP3 protein degradation. Phosphorylated by AKT1 and ILK1. Upon insulin-mediated signaling, the activated PKB/AKT1 protein kinase phosphorylates and deactivates GSK3B, resulting in the dephosphorylation and activation of GYS1. Activated by phosphorylation at Tyr-216. Phosphorylation of Ser-9 in the hippocampus peaks at CT0, whereas in the liver it peaks at CT12. Inactivated by phosphorylation at Ser-9. Phosphorylated in a circadian manner in the hippocampus. Post-translationally, mono-ADP-ribosylation by PARP10 negatively regulates kinase activity. In terms of processing, palmitoylated. Palmitoylation by ZDHHC4 prevents AKT1-mediated phosphorylation. Expressed in the liver (at protein level).

The protein resides in the cytoplasm. It is found in the nucleus. Its subcellular location is the cell membrane. The catalysed reaction is L-seryl-[tau protein] + ATP = O-phospho-L-seryl-[tau protein] + ADP + H(+). It carries out the reaction L-threonyl-[tau protein] + ATP = O-phospho-L-threonyl-[tau protein] + ADP + H(+). It catalyses the reaction L-seryl-[protein] + ATP = O-phospho-L-seryl-[protein] + ADP + H(+). The enzyme catalyses L-threonyl-[protein] + ATP = O-phospho-L-threonyl-[protein] + ADP + H(+). Its activity is regulated as follows. Activated by phosphorylation at Tyr-216. In response to insulin, inhibited by phosphorylation at Ser-9 by PKB/AKT1 and RPS6KA3; phosphorylation at this site causes a conformational change, preventing access of substrates to the active site. Inhibited by IL22 treatment which also triggers phosphorylation at Ser-9, promoting inactivation. Inhibited by lithium. Functionally, constitutively active protein kinase that acts as a negative regulator in the hormonal control of glucose homeostasis, Wnt signaling and regulation of transcription factors and microtubules, by phosphorylating and inactivating glycogen synthase (GYS1 or GYS2), EIF2B, CTNNB1/beta-catenin, APC, AXIN1, DPYSL2/CRMP2, JUN, NFATC1/NFATC, MAPT/TAU and MACF1. Requires primed phosphorylation of the majority of its substrates. In skeletal muscle, contributes to insulin regulation of glycogen synthesis by phosphorylating and inhibiting GYS1 activity and hence glycogen synthesis. May also mediate the development of insulin resistance by regulating activation of transcription factors. Regulates protein synthesis by controlling the activity of initiation factor 2B (EIF2BE/EIF2B5) in the same manner as glycogen synthase. In Wnt signaling, GSK3B forms a multimeric complex with APC, AXIN1 and CTNNB1/beta-catenin and phosphorylates the N-terminus of CTNNB1 leading to its degradation mediated by ubiquitin/proteasomes. Phosphorylates JUN at sites proximal to its DNA-binding domain, thereby reducing its affinity for DNA. Phosphorylates NFATC1/NFATC on conserved serine residues promoting NFATC1/NFATC nuclear export, shutting off NFATC1/NFATC gene regulation, and thereby opposing the action of calcineurin. Phosphorylates MAPT/TAU on 'Thr-548', decreasing significantly MAPT/TAU ability to bind and stabilize microtubules. MAPT/TAU is the principal component of neurofibrillary tangles in Alzheimer disease. Plays an important role in ERBB2-dependent stabilization of microtubules at the cell cortex. Phosphorylates MACF1, inhibiting its binding to microtubules which is critical for its role in bulge stem cell migration and skin wound repair. Probably regulates NF-kappa-B (NFKB1) at the transcriptional level and is required for the NF-kappa-B-mediated anti-apoptotic response to TNF-alpha (TNF/TNFA). Negatively regulates replication in pancreatic beta-cells, resulting in apoptosis, loss of beta-cells and diabetes. Through phosphorylation of the anti-apoptotic protein MCL1, may control cell apoptosis in response to growth factors deprivation. Phosphorylates MUC1 in breast cancer cells, decreasing the interaction of MUC1 with CTNNB1/beta-catenin. Is necessary for the establishment of neuronal polarity and axon outgrowth. Phosphorylates MARK2, leading to inhibition of its activity. Phosphorylates SIK1 at 'Thr-182', leading to sustainment of its activity. Phosphorylates ZC3HAV1 which enhances its antiviral activity. Phosphorylates SNAI1, leading to its ubiquitination and proteasomal degradation. Phosphorylates SFPQ at 'Thr-687' upon T-cell activation. Phosphorylates NR1D1 st 'Ser-55' and 'Ser-59' and stabilizes it by protecting it from proteasomal degradation. Regulates the circadian clock via phosphorylation of the major clock components including BMAL1, CLOCK and PER2. Phosphorylates CLOCK AT 'Ser-427' and targets it for proteasomal degradation. Phosphorylates BMAL1 at 'Ser-17' and 'Ser-21' and primes it for ubiquitination and proteasomal degradation. Phosphorylates FBXL2 at 'Thr-404' and primes it for ubiquitination by the SCF(FBXO3) complex and proteasomal degradation. Phosphorylates OGT at 'Ser-3' or 'Ser-4' which positively regulates its activity. Phosphorylates MYCN in neuroblastoma cells which may promote its degradation. Regulates the circadian rhythmicity of hippocampal long-term potentiation and BMAL1 and PER2 expression. Acts as a regulator of autophagy by mediating phosphorylation of KAT5/TIP60 under starvation conditions, activating KAT5/TIP60 acetyltransferase activity and promoting acetylation of key autophagy regulators, such as ULK1 and RUBCNL/Pacer. Negatively regulates extrinsic apoptotic signaling pathway via death domain receptors. Promotes the formation of an anti-apoptotic complex, made of DDX3X, BRIC2 and GSK3B, at death receptors, including TNFRSF10B. The anti-apoptotic function is most effective with weak apoptotic signals and can be overcome by stronger stimulation. Phosphorylates E2F1, promoting the interaction between E2F1 and USP11, stabilizing E2F1 and promoting its activity. Phosphorylates mTORC2 complex component RICTOR at 'Ser-1235' in response to endoplasmic stress, inhibiting mTORC2. Phosphorylates FXR1, promoting FXR1 ubiquitination by the SCF(FBXO4) complex and FXR1 degradation by the proteasome. Phosphorylates interleukin-22 receptor subunit IL22RA1, preventing its proteasomal degradation. This Mus musculus (Mouse) protein is Glycogen synthase kinase-3 beta.